The chain runs to 31 residues: Cytochrome b6-f complex subunit 6 (31 aa).

Residues 4–24 (ITSYFGFLLAALTITSALFIG) form a helical membrane-spanning segment.

The protein belongs to the PetL family. As to quaternary structure, the 4 large subunits of the cytochrome b6-f complex are cytochrome b6, subunit IV (17 kDa polypeptide, PetD), cytochrome f and the Rieske protein, while the 4 small subunits are PetG, PetL, PetM and PetN. The complex functions as a dimer.

It is found in the plastid. Its subcellular location is the chloroplast thylakoid membrane. Functionally, component of the cytochrome b6-f complex, which mediates electron transfer between photosystem II (PSII) and photosystem I (PSI), cyclic electron flow around PSI, and state transitions. PetL is important for photoautotrophic growth as well as for electron transfer efficiency and stability of the cytochrome b6-f complex. This is Cytochrome b6-f complex subunit 6 from Solanum tuberosum (Potato).